A 1040-amino-acid chain; its full sequence is Contactin-2 (1040 aa).

Residues 1 to 30 (MGTHARKKASLLLLVLATVALVSSPGWSFA) form the signal peptide. Ig-like C2-type domains follow at residues 39 to 130 (PIFE…AVLR), 135 to 224 (QEFS…SVFS), 241 to 324 (PSIK…GRII), 329 to 413 (PEWL…AELA), 419 to 506 (PDFR…GILS), and 511 to 605 (TKIT…ATVL). Disulfide bonds link C63-C113, C157-C209, C263-C308, and C350-C397. Residues N78, N200, and N206 are each glycosylated (N-linked (GlcNAc...) asparagine). N-linked (GlcNAc...) asparagine glycans are attached at residues N463, N479, N500, and N527. 4 consecutive Fibronectin type-III domains span residues 612-710 (PPGG…TKEA), 715-812 (APSG…SAEE), 817-913 (APAK…VKPP), and 917-1008 (PPGN…NGGT). N777 carries N-linked (GlcNAc...) asparagine glycosylation. The short motif at 796-798 (RGD) is the Cell attachment site element. 3 N-linked (GlcNAc...) asparagine glycosylation sites follow: N832, N920, and N942. The interval 895-921 (RAGTGPASPSADAMTVKPPPRRPPGNI) is disordered. The GPI-anchor amidated alanine moiety is linked to residue A1015. Residues 1016-1040 (AARPAHPGPAFSCMVILMLAGYQKL) constitute a propeptide, removed in mature form.

Belongs to the immunoglobulin superfamily. Contactin family. In terms of tissue distribution, in neural tissues in embryos, and in adult brain, spinal cord and cerebellum.

Its subcellular location is the cell membrane. In terms of biological role, may play a role in the initial growth and guidance of axons. May be involved in cell adhesion. In conjunction with another transmembrane protein, CNTNAP2, contributes to the organization of axonal domains at nodes of Ranvier by maintaining voltage-gated potassium channels at the juxtaparanodal region. This chain is Contactin-2 (Cntn2), found in Rattus norvegicus (Rat).